A 217-amino-acid polypeptide reads, in one-letter code: MYLFHLCLVFACVPCPTVQASKLCLGWLWDMDIDPYKEFGSSYQLLNFLPLDFFPDLNALVDTAAALYEEELTGREHCSPHHTAIRQALVCWEELTRLITWMSENTTEEVRRIIVDHVNNTWGLKVRQTLWFHLSCLTFGQHTVQEFLVSFGVWIRTPAPYRPPNAPILSTLPEHTVIRRRGGSRAARSPRRRTPSPRRRRSQSPRRRRSQSPASNC.

The first 20 residues, 1–20, serve as a signal peptide directing secretion; that stretch reads MYLFHLCLVFACVPCPTVQA. Residues 26–28 are HBEAG; the sequence is GWL. A disordered region spans residues 166 to 217; that stretch reads APILSTLPEHTVIRRRGGSRAARSPRRRTPSPRRRRSQSPRRRRSQSPASNC. The span at 178 to 210 shows a compositional bias: basic residues; that stretch reads IRRRGGSRAARSPRRRTPSPRRRRSQSPRRRRS. The stretch at 189-195 is one 1; half-length repeat; sequence SPRRRTP. A 3 X 8 AA repeats of S-P-R-R-R-R-S-Q region spans residues 189–211; it reads SPRRRTPSPRRRRSQSPRRRRSQ. Positions 189-217 are excised as a propeptide; the sequence is SPRRRTPSPRRRRSQSPRRRRSQSPASNC. A run of 2 repeats spans residues 196–203 and 204–211.

It belongs to the orthohepadnavirus precore antigen family. In terms of assembly, homodimerizes. In terms of processing, phosphorylated. Post-translationally, cleaved by host furin.

It localises to the secreted. It is found in the host nucleus. Its function is as follows. May regulate immune response to the intracellular capsid in acting as a T-cell tolerogen, by having an immunoregulatory effect which prevents destruction of infected cells by cytotoxic T-cells. This immune regulation may predispose to chronicity during perinatal infections and prevent severe liver injury during adult infections. This is External core antigen from Otospermophilus beecheyi (California ground squirrel).